The primary structure comprises 509 residues: Cytochrome P450 monooxygenase traB (509 aa).

A helical transmembrane segment spans residues 8–28 (LVELVSITGGLIVLFIAYTGF). Position 453 (cysteine 453) interacts with heme.

This sequence belongs to the cytochrome P450 family. It depends on heme as a cofactor.

It localises to the membrane. It participates in secondary metabolite biosynthesis. Its function is as follows. Cytochrome P450 monooxygenase; part of the tra gene cluster that produces terrestric acid. The clavatol biosynthesis cluster cla and the terrestric acid cluster tra are both involved in the production of peniphenones and penilactones. The non-reducing PKS claF is responsible for the formation of clavatol from successive condensations of 3 malonyl-CoA units, presumably with a simple acetyl-CoA starter unit, and 2 methylation steps. The esterase claE probably collaborates with claF by catalyzing the hydrolysis of ACP-bound acyl intermediates to free the ACP from stalled intermediates. The clavatol oxidase claD then converts clavatol to hydroxyclavatol. Spontaneous dehydration of hydroxyclavatol leads to the accumulation of the highly active ortho-quinone methide. On the other hand, the PKS-NRPS hybrid traA is involved in the formation of crustosic acid, with the help of traB and traD. The polyketide synthase module (PKS) of traA is responsible for the synthesis of the polyketide backbone via the condensation of an acetyl-CoA starter unit with 3 malonyl-CoA units. The downstream nonribosomal peptide synthetase (NRPS) module then amidates the carboxyl end of the polyketide with L-malic acid. Because traA lacks a designated enoylreductase (ER) domain, the required activity is provided the enoyl reductase traG. Crustosic acid undergoes decarboxylation and isomerization to the terrestric acid, catalyzed by the 2-oxoglutarate-dependent dioxygenase traH. Both acids are further converted to the 2 gamma-butyrolactones (R)-5-methyltetronic acid and (S)-5-carboxylmethyltetronic acid, with involvement of the cytochrome P450 monooxygenase claJ. Spontaneous addition of the methide to these gamma-butyrolactones leads to peniphenone D and penilactone D, which undergo again stereospecific attacking by methide to give penilactones A and B. The protein is Cytochrome P450 monooxygenase traB of Penicillium crustosum (Blue mold fungus).